We begin with the raw amino-acid sequence, 160 residues long: MSDSPTTAHTRLELPIDIIRIQALLPHRYPFLLVDRILELDQKQKRIVAQKNVSINEPFFQGHFPEHPVMPGVLIIEALAQAGGVMTQLNLSHNGHSSLLFYMVRVDNARFNKQVVPGDILILDMTMKRRIRNMGCYYGEARVNGEVVACADIMCAGVKS.

Residue H63 is part of the active site.

This sequence belongs to the thioester dehydratase family. FabZ subfamily.

It is found in the cytoplasm. The catalysed reaction is a (3R)-hydroxyacyl-[ACP] = a (2E)-enoyl-[ACP] + H2O. Involved in unsaturated fatty acids biosynthesis. Catalyzes the dehydration of short chain beta-hydroxyacyl-ACPs and long chain saturated and unsaturated beta-hydroxyacyl-ACPs. The polypeptide is 3-hydroxyacyl-[acyl-carrier-protein] dehydratase FabZ (Xylella fastidiosa (strain M23)).